Here is a 403-residue protein sequence, read N- to C-terminus: Microtubule-associated protein tau (403 aa).

Residues 1 to 32 show a composition bias toward basic and acidic residues; that stretch reads MAEPRQEFDVMEDHAQGDYTLQDHEGDMEPGL. The disordered stretch occupies residues 1–219; it reads MAEPRQEFDV…GPMPDLKNVK (219 aa). The residue at position 2 (alanine 2) is an N-acetylalanine. Tyrosine 19 is modified (phosphotyrosine). Lysine 33 is covalently cross-linked (Glycyl lysine isopeptide (Lys-Gly) (interchain with G-Cter in ubiquitin)). 2 positions are modified to phosphoserine: serine 35 and serine 50. Polar residues predominate over residues 50-60; that stretch reads SETSDAKSTPT. Threonine 58, threonine 60, and threonine 71 each carry phosphothreonine. Residues 90 to 106 show a composition bias toward basic and acidic residues; the sequence is KGKDGTGPDDKKAKGAD. Threonine 115 is modified (phosphothreonine). Arginine 117 carries the omega-N-methylarginine modification. Lysine 125 carries the N6,N6-dimethyllysine; alternate modification. Lysine 125 bears the N6-acetyllysine; alternate mark. Residues threonine 131, threonine 137, threonine 138, and threonine 143 each carry the phosphothreonine modification. The span at 136-147 shows a compositional bias: low complexity; that stretch reads KTTPTPKTSPGT. 2 positions are modified to phosphoserine: serine 153 and serine 157. Over residues 156–176 the composition is skewed to low complexity; that stretch reads RSGYSSPGSPGTPGSRSRTPS. Tyrosine 159 carries the phosphotyrosine modification. Phosphoserine is present on residues serine 160, serine 161, and serine 164. Residues threonine 167 and threonine 174 each carry the phosphothreonine modification. Residue serine 176 is modified to Phosphoserine. The residue at position 179 (threonine 179) is a Phosphothreonine. Lysine 187 carries the N6-acetyllysine modification. Phosphothreonine is present on threonine 193. A phosphoserine mark is found at serine 197 and serine 199. Tau/MAP repeat units lie at residues 206–236, 237–267, 268–298, and 299–330; these read QAAP…GGGK, VQII…GGGS, VQIV…GGGQ, and VEVK…GGGN. Lysine 216 participates in a covalent cross-link: Glycyl lysine isopeptide (Lys-Gly) (interchain with G-Cter in ubiquitin). Lysine 221 is subject to N6-acetyllysine; alternate. At lysine 221 the chain carries N6-methyllysine; alternate. Lysine 221 is covalently cross-linked (Glycyl lysine isopeptide (Lys-Gly) (interchain with G-Cter in ubiquitin); alternate). Serine 224 carries the phosphoserine modification. Lysine 229 participates in a covalent cross-link: Glycyl lysine isopeptide (Lys-Gly) (interchain with G-Cter in ubiquitin). At lysine 243 the chain carries N6-acetyllysine; alternate. Residue lysine 243 forms a Glycyl lysine isopeptide (Lys-Gly) (interchain with G-Cter in ubiquitin); alternate linkage. A phosphoserine mark is found at serine 247 and serine 251. At lysine 252 the chain carries N6-acetyllysine. The cysteines at positions 253 and 284 are disulfide-linked. Serine 255 carries the post-translational modification Phosphoserine. Lysine 260 carries the post-translational modification N6-acetyllysine; alternate. A Glycyl lysine isopeptide (Lys-Gly) (interchain with G-Cter in ubiquitin); alternate cross-link involves residue lysine 260. Serine 267 carries the post-translational modification Phosphoserine. The residue at position 273 (lysine 273) is an N6,N6-dimethyllysine; alternate. An N6-acetyllysine; alternate mark is found at lysine 273, lysine 279, and lysine 283. Residues lysine 273, lysine 279, and lysine 283 each participate in a glycyl lysine isopeptide (Lys-Gly) (interchain with G-Cter in ubiquitin); alternate cross-link. Phosphoserine is present on serine 286. N6-acetyllysine; alternate is present on residues lysine 293, lysine 305, and lysine 309. Residues lysine 293, lysine 305, and lysine 309 each participate in a glycyl lysine isopeptide (Lys-Gly) (interchain with G-Cter in ubiquitin); alternate cross-link. Arginine 311 is modified (omega-N-methylarginine). Serine 314 carries the phosphoserine modification. Residue lysine 315 forms a Glycyl lysine isopeptide (Lys-Gly) (interchain with G-Cter in ubiquitin) linkage. Serine 318 carries the post-translational modification Phosphoserine. Position 331 is an N6-acetyllysine; alternate (lysine 331). Lysine 331 participates in a covalent cross-link: Glycyl lysine isopeptide (Lys-Gly) (interchain with G-Cter in ubiquitin); alternate. Lysine 337 participates in a covalent cross-link: Glycyl lysine isopeptide (Lys-Gly) (interchain with G-Cter in ubiquitin). The residue at position 347 (lysine 347) is an N6-acetyllysine; alternate. Lysine 347 participates in a covalent cross-link: Glycyl lysine isopeptide (Lys-Gly) (interchain with G-Cter in ubiquitin); alternate. Position 356 is a phosphotyrosine (tyrosine 356). A phosphoserine mark is found at serine 358 and serine 362. Residues 360 to 379 form a disordered region; it reads VVSGDTSPRHLSNVSSTGSI. Residues 363 to 378 show a composition bias toward polar residues; it reads GDTSPRHLSNVSSTGS. Threonine 365 bears the Phosphothreonine mark. Phosphoserine occurs at positions 366, 371, 378, and 384. A Phosphothreonine modification is found at threonine 389.

In terms of assembly, interacts with MARK1, MARK2, MARK3 and MARK4. Interacts with SQSTM1 when polyubiquitinated. Interacts with PSMC2 through SQSTM1. Interacts with FKBP4. Binds to CSNK1D. Interacts with SGK1. Interacts with PIN1. Interacts with LRRK2. Interacts with LRP1, leading to endocytosis; this interaction is reduced in the presence of LRPAP1/RAP. Polyubiquitinated. Requires functional TRAF6 and may provoke SQSTM1-dependent degradation by the proteasome. In terms of processing, phosphorylation at various serine and threonine residues in S-P or T-P motifs by proline-directed protein kinases (PDPK1, CDK1, CDK5, GSK3, MAPK) (a few sites per protein in interphase, more in mitosis), and at serine residues in K-X-G-S motifs by MAP/microtubule affinity-regulating kinase (MARK1, MARK2, MARK3, MARK4), causing detachment from microtubules, and their disassembly. Phosphorylation at Ser-224 by BRSK1 and BRSK2 in neurons affects ability to bind microtubules and plays a role in neuron polarization. Phosphorylated by PHK. Dephosphorylation at several serine and threonine residues by the serine/threonine phosphatase PPP5C. As to expression, expressed in neurons.

The protein localises to the cytoplasm. Its subcellular location is the cytosol. It localises to the cell membrane. It is found in the cytoskeleton. The protein resides in the cell projection. The protein localises to the axon. Its subcellular location is the dendrite. Functionally, promotes microtubule assembly and stability, and might be involved in the establishment and maintenance of neuronal polarity. The C-terminus binds axonal microtubules while the N-terminus binds neural plasma membrane components, suggesting that tau functions as a linker protein between both. Axonal polarity is predetermined by tau localization (in the neuronal cell) in the domain of the cell body defined by the centrosome. The short isoforms allow plasticity of the cytoskeleton whereas the longer isoforms may preferentially play a role in its stabilization. This is Microtubule-associated protein tau (MAPT) from Capra hircus (Goat).